A 94-amino-acid polypeptide reads, in one-letter code: Small ribosomal subunit protein uS17 (94 aa).

This sequence belongs to the universal ribosomal protein uS17 family. Part of the 30S ribosomal subunit.

In terms of biological role, one of the primary rRNA binding proteins, it binds specifically to the 5'-end of 16S ribosomal RNA. This is Small ribosomal subunit protein uS17 from Deinococcus geothermalis (strain DSM 11300 / CIP 105573 / AG-3a).